A 356-amino-acid polypeptide reads, in one-letter code: Glutamine synthetase (356 aa).

The GS beta-grasp domain maps to 19–99 (IIAEYIWIGG…VMCDCYTPRG (81 aa)). A GS catalytic domain is found at 106 to 356 (KRYNAAKILS…IAQTTILWKP (251 aa)).

Belongs to the glutamine synthetase family. Homooctamer.

Its subcellular location is the cytoplasm. The catalysed reaction is L-glutamate + NH4(+) + ATP = L-glutamine + ADP + phosphate + H(+). The sequence is that of Glutamine synthetase from Hordeum vulgare (Barley).